A 113-amino-acid polypeptide reads, in one-letter code: U11-theraphotoxin-Hhn1p (113 aa).

An N-terminal signal peptide occupies residues 1-21 (MNTVRVTFLLVFVLAVSLGQA). The propeptide occupies 22–74 (DKDENRMEMQEKTEQGKSYLDFAENLLLQKLEELEAKLLEEDSEESRNSRQKR). The segment at 61–83 (EEDSEESRNSRQKRCIGEGVPCD) is disordered. 3 disulfides stabilise this stretch: cysteine 75-cysteine 90, cysteine 82-cysteine 95, and cysteine 89-cysteine 110.

Belongs to the neurotoxin 14 (magi-1) family. 01 (HNTX-16) subfamily. Expressed by the venom gland.

The protein resides in the secreted. Functionally, probable ion channel inhibitor. The polypeptide is U11-theraphotoxin-Hhn1p (Cyriopagopus hainanus (Chinese bird spider)).